Consider the following 337-residue polypeptide: Ferredoxin--NADP reductase (337 aa).

7 residues coordinate FAD: Asp-33, Gln-41, Tyr-46, Ala-86, Phe-120, Asp-286, and Thr-327.

Belongs to the ferredoxin--NADP reductase type 2 family. Homodimer. Requires FAD as cofactor.

It carries out the reaction 2 reduced [2Fe-2S]-[ferredoxin] + NADP(+) + H(+) = 2 oxidized [2Fe-2S]-[ferredoxin] + NADPH. The polypeptide is Ferredoxin--NADP reductase (Rickettsia canadensis (strain McKiel)).